Here is a 333-residue protein sequence, read N- to C-terminus: 5-formaminoimidazole-4-carboxamide-1-(beta)-D-ribofuranosyl 5'-monophosphate synthetase (333 aa).

Histidine 10 and serine 74 together coordinate 5-amino-1-(5-phospho-beta-D-ribosyl)imidazole-4-carboxamide. The 230-residue stretch at arginine 95–asparagine 324 folds into the ATP-grasp domain. Residues valine 125 to tyrosine 185 and glutamate 207 contribute to the ATP site. 5-amino-1-(5-phospho-beta-D-ribosyl)imidazole-4-carboxamide is bound at residue asparagine 230. Glutamate 269 and glutamate 282 together coordinate Mg(2+).

Belongs to the phosphohexose mutase family. Requires Mg(2+) as cofactor. The cofactor is Mn(2+).

The catalysed reaction is 5-amino-1-(5-phospho-beta-D-ribosyl)imidazole-4-carboxamide + formate + ATP = 5-formamido-1-(5-phospho-D-ribosyl)imidazole-4-carboxamide + ADP + phosphate. The protein operates within purine metabolism; IMP biosynthesis via de novo pathway; 5-formamido-1-(5-phospho-D-ribosyl)imidazole-4-carboxamide from 5-amino-1-(5-phospho-D-ribosyl)imidazole-4-carboxamide (formate route): step 1/1. Its function is as follows. Catalyzes the ATP- and formate-dependent formylation of 5-aminoimidazole-4-carboxamide-1-beta-d-ribofuranosyl 5'-monophosphate (AICAR) to 5-formaminoimidazole-4-carboxamide-1-beta-d-ribofuranosyl 5'-monophosphate (FAICAR) in the absence of folates. This Sulfolobus acidocaldarius (strain ATCC 33909 / DSM 639 / JCM 8929 / NBRC 15157 / NCIMB 11770) protein is 5-formaminoimidazole-4-carboxamide-1-(beta)-D-ribofuranosyl 5'-monophosphate synthetase.